Here is a 132-residue protein sequence, read N- to C-terminus: NADH-quinone oxidoreductase subunit A (132 aa).

3 consecutive transmembrane segments (helical) span residues 14 to 34, 66 to 86, and 96 to 116; these read FFTF…ISWI, FYLV…LYAW, and IGFI…IYLI.

Belongs to the complex I subunit 3 family. In terms of assembly, NDH-1 is composed of 13 different subunits. Subunits NuoA, H, J, K, L, M, N constitute the membrane sector of the complex.

It is found in the cell membrane. The enzyme catalyses a quinone + NADH + 5 H(+)(in) = a quinol + NAD(+) + 4 H(+)(out). Functionally, NDH-1 shuttles electrons from NADH, via FMN and iron-sulfur (Fe-S) centers, to quinones in the respiratory chain. The immediate electron acceptor for the enzyme in this species is believed to be ubiquinone. Couples the redox reaction to proton translocation (for every two electrons transferred, four hydrogen ions are translocated across the cytoplasmic membrane), and thus conserves the redox energy in a proton gradient. The polypeptide is NADH-quinone oxidoreductase subunit A (Buchnera aphidicola subsp. Baizongia pistaciae (strain Bp)).